We begin with the raw amino-acid sequence, 99 residues long: Aphid transmission protein (99 aa).

Belongs to the caulimoviridae ORF II family.

Its function is as follows. This protein is involved in virus transmission. The sequence is that of Aphid transmission protein from Cauliflower mosaic virus (strain W260) (CaMV).